The following is a 666-amino-acid chain: DNA mismatch repair protein MutL (666 aa).

The protein belongs to the DNA mismatch repair MutL/HexB family.

This protein is involved in the repair of mismatches in DNA. It is required for dam-dependent methyl-directed DNA mismatch repair. May act as a 'molecular matchmaker', a protein that promotes the formation of a stable complex between two or more DNA-binding proteins in an ATP-dependent manner without itself being part of a final effector complex. In Clostridium botulinum (strain Okra / Type B1), this protein is DNA mismatch repair protein MutL.